We begin with the raw amino-acid sequence, 367 residues long: Putative S-adenosyl-L-methionine-dependent methyltransferase MT0751 (367 aa).

Residues Asp137 and Asp166–Leu167 contribute to the S-adenosyl-L-methionine site. A compositionally biased stretch (polar residues) spans Thr348–Thr358. A disordered region spans residues Thr348–Gly367.

The protein belongs to the UPF0677 family.

Exhibits S-adenosyl-L-methionine-dependent methyltransferase activity. The chain is Putative S-adenosyl-L-methionine-dependent methyltransferase MT0751 from Mycobacterium tuberculosis (strain CDC 1551 / Oshkosh).